The following is a 279-amino-acid chain: Undecaprenyl-diphosphatase (279 aa).

7 consecutive transmembrane segments (helical) span residues 10-30, 48-68, 96-116, 128-148, 203-223, 229-249, and 259-279; these read FICF…FLPI, LGVS…IYYF, LFLY…LIKL, GLFS…LSEI, SFLV…FSLF, IDII…IFAI, and NNTL…LTTL.

This sequence belongs to the UppP family.

Its subcellular location is the cell inner membrane. It carries out the reaction di-trans,octa-cis-undecaprenyl diphosphate + H2O = di-trans,octa-cis-undecaprenyl phosphate + phosphate + H(+). In terms of biological role, catalyzes the dephosphorylation of undecaprenyl diphosphate (UPP). Confers resistance to bacitracin. The polypeptide is Undecaprenyl-diphosphatase (Prochlorococcus marinus (strain NATL2A)).